Here is a 494-residue protein sequence, read N- to C-terminus: Glutamyl-tRNA(Gln) amidotransferase subunit A (494 aa).

Active-site charge relay system residues include lysine 81 and serine 156. The active-site Acyl-ester intermediate is serine 180.

Belongs to the amidase family. GatA subfamily. As to quaternary structure, heterotrimer of A, B and C subunits.

It catalyses the reaction L-glutamyl-tRNA(Gln) + L-glutamine + ATP + H2O = L-glutaminyl-tRNA(Gln) + L-glutamate + ADP + phosphate + H(+). Its function is as follows. Allows the formation of correctly charged Gln-tRNA(Gln) through the transamidation of misacylated Glu-tRNA(Gln) in organisms which lack glutaminyl-tRNA synthetase. The reaction takes place in the presence of glutamine and ATP through an activated gamma-phospho-Glu-tRNA(Gln). This Mycolicibacterium gilvum (strain PYR-GCK) (Mycobacterium gilvum (strain PYR-GCK)) protein is Glutamyl-tRNA(Gln) amidotransferase subunit A.